Reading from the N-terminus, the 364-residue chain is Alanine racemase (364 aa).

Lys39 (proton acceptor; specific for D-alanine) is an active-site residue. Lys39 carries the N6-(pyridoxal phosphate)lysine modification. Arg137 contributes to the substrate binding site. Tyr258 functions as the Proton acceptor; specific for L-alanine in the catalytic mechanism. Residue Met306 coordinates substrate.

Belongs to the alanine racemase family. It depends on pyridoxal 5'-phosphate as a cofactor.

It carries out the reaction L-alanine = D-alanine. It participates in amino-acid biosynthesis; D-alanine biosynthesis; D-alanine from L-alanine: step 1/1. In terms of biological role, catalyzes the interconversion of L-alanine and D-alanine. May also act on other amino acids. The sequence is that of Alanine racemase (alr) from Methylobacterium sp. (strain 4-46).